The following is a 48-amino-acid chain: Thiamine thiazole synthase, chloroplastic (48 aa).

Substrate is bound by residues A18 and V40.

This sequence belongs to the THI4 family. In terms of assembly, homooctamer. Fe cation serves as cofactor.

It is found in the plastid. The protein localises to the chloroplast. The catalysed reaction is [ADP-thiazole synthase]-L-cysteine + glycine + NAD(+) = [ADP-thiazole synthase]-dehydroalanine + ADP-5-ethyl-4-methylthiazole-2-carboxylate + nicotinamide + 3 H2O + 2 H(+). In terms of biological role, involved in biosynthesis of the thiamine precursor thiazole. Catalyzes the conversion of NAD and glycine to adenosine diphosphate 5-(2-hydroxyethyl)-4-methylthiazole-2-carboxylic acid (ADT), an adenylated thiazole intermediate. The reaction includes an iron-dependent sulfide transfer from a conserved cysteine residue of the protein to a thiazole intermediate. The enzyme can only undergo a single turnover, which suggests it is a suicide enzyme. May have additional roles in adaptation to various stress conditions and in DNA damage tolerance. The polypeptide is Thiamine thiazole synthase, chloroplastic (THI1) (Populus euphratica (Euphrates poplar)).